Here is a 317-residue protein sequence, read N- to C-terminus: Ribosomal protein L11 methyltransferase (317 aa).

Residues Thr-139, Gly-162, Asp-184, and Asn-226 each contribute to the S-adenosyl-L-methionine site. Positions 274-297 are disordered; the sequence is EHVATRPDPASPGGDRRAGRGDAG.

The protein belongs to the methyltransferase superfamily. PrmA family.

The protein localises to the cytoplasm. It catalyses the reaction L-lysyl-[protein] + 3 S-adenosyl-L-methionine = N(6),N(6),N(6)-trimethyl-L-lysyl-[protein] + 3 S-adenosyl-L-homocysteine + 3 H(+). Functionally, methylates ribosomal protein L11. This chain is Ribosomal protein L11 methyltransferase, found in Sorangium cellulosum (strain So ce56) (Polyangium cellulosum (strain So ce56)).